Consider the following 262-residue polypeptide: Phosphatidylserine decarboxylase proenzyme (262 aa).

Catalysis depends on charge relay system; for autoendoproteolytic cleavage activity residues D86, H142, and S226. S226 functions as the Schiff-base intermediate with substrate; via pyruvic acid; for decarboxylase activity in the catalytic mechanism. S226 is subject to Pyruvic acid (Ser); by autocatalysis.

The protein belongs to the phosphatidylserine decarboxylase family. PSD-B subfamily. Prokaryotic type I sub-subfamily. Heterodimer of a large membrane-associated beta subunit and a small pyruvoyl-containing alpha subunit. Requires pyruvate as cofactor. In terms of processing, is synthesized initially as an inactive proenzyme. Formation of the active enzyme involves a self-maturation process in which the active site pyruvoyl group is generated from an internal serine residue via an autocatalytic post-translational modification. Two non-identical subunits are generated from the proenzyme in this reaction, and the pyruvate is formed at the N-terminus of the alpha chain, which is derived from the carboxyl end of the proenzyme. The autoendoproteolytic cleavage occurs by a canonical serine protease mechanism, in which the side chain hydroxyl group of the serine supplies its oxygen atom to form the C-terminus of the beta chain, while the remainder of the serine residue undergoes an oxidative deamination to produce ammonia and the pyruvoyl prosthetic group on the alpha chain. During this reaction, the Ser that is part of the protease active site of the proenzyme becomes the pyruvoyl prosthetic group, which constitutes an essential element of the active site of the mature decarboxylase.

The protein localises to the cell membrane. It catalyses the reaction a 1,2-diacyl-sn-glycero-3-phospho-L-serine + H(+) = a 1,2-diacyl-sn-glycero-3-phosphoethanolamine + CO2. It participates in phospholipid metabolism; phosphatidylethanolamine biosynthesis; phosphatidylethanolamine from CDP-diacylglycerol: step 2/2. In terms of biological role, catalyzes the formation of phosphatidylethanolamine (PtdEtn) from phosphatidylserine (PtdSer). The protein is Phosphatidylserine decarboxylase proenzyme of Bacillus thuringiensis (strain Al Hakam).